Reading from the N-terminus, the 342-residue chain is S-adenosylmethionine:tRNA ribosyltransferase-isomerase (342 aa).

It belongs to the QueA family. As to quaternary structure, monomer.

The protein localises to the cytoplasm. It catalyses the reaction 7-aminomethyl-7-carbaguanosine(34) in tRNA + S-adenosyl-L-methionine = epoxyqueuosine(34) in tRNA + adenine + L-methionine + 2 H(+). It functions in the pathway tRNA modification; tRNA-queuosine biosynthesis. In terms of biological role, transfers and isomerizes the ribose moiety from AdoMet to the 7-aminomethyl group of 7-deazaguanine (preQ1-tRNA) to give epoxyqueuosine (oQ-tRNA). The protein is S-adenosylmethionine:tRNA ribosyltransferase-isomerase of Streptococcus pyogenes serotype M3 (strain ATCC BAA-595 / MGAS315).